The sequence spans 39 residues: Cytochrome b559 subunit beta (39 aa).

The chain crosses the membrane as a helical span at residues 14-30; the sequence is WLAIHGLAVPTVFFLGS. Residue H18 coordinates heme.

The protein belongs to the PsbE/PsbF family. As to quaternary structure, heterodimer of an alpha subunit and a beta subunit. PSII is composed of 1 copy each of membrane proteins PsbA, PsbB, PsbC, PsbD, PsbE, PsbF, PsbH, PsbI, PsbJ, PsbK, PsbL, PsbM, PsbT, PsbX, PsbY, PsbZ, Psb30/Ycf12, at least 3 peripheral proteins of the oxygen-evolving complex and a large number of cofactors. It forms dimeric complexes. The cofactor is heme b.

It localises to the plastid. The protein localises to the chloroplast thylakoid membrane. This b-type cytochrome is tightly associated with the reaction center of photosystem II (PSII). PSII is a light-driven water:plastoquinone oxidoreductase that uses light energy to abstract electrons from H(2)O, generating O(2) and a proton gradient subsequently used for ATP formation. It consists of a core antenna complex that captures photons, and an electron transfer chain that converts photonic excitation into a charge separation. In Ephedra sinica (Chinese ephedra), this protein is Cytochrome b559 subunit beta.